A 32-amino-acid polypeptide reads, in one-letter code: Photosystem II reaction center protein T (32 aa).

A helical membrane pass occupies residues 3–23 (SIAYVLIFACLIGLFFFAIFF).

This sequence belongs to the PsbT family. In terms of assembly, PSII is composed of 1 copy each of membrane proteins PsbA, PsbB, PsbC, PsbD, PsbE, PsbF, PsbH, PsbI, PsbJ, PsbK, PsbL, PsbM, PsbT, PsbX, PsbY, PsbZ, Psb30/Ycf12, peripheral proteins PsbO, CyanoQ (PsbQ), PsbU, PsbV and a large number of cofactors. It forms dimeric complexes.

It localises to the cellular thylakoid membrane. Found at the monomer-monomer interface of the photosystem II (PS II) dimer, plays a role in assembly and dimerization of PSII. PSII is a light-driven water plastoquinone oxidoreductase, using light energy to abstract electrons from H(2)O, generating a proton gradient subsequently used for ATP formation. The protein is Photosystem II reaction center protein T of Cyanothece sp. (strain PCC 7425 / ATCC 29141).